A 790-amino-acid chain; its full sequence is MLAIRSSNYLRCIPSLCTKTQISQFSSVLISFSRQISHLRLSSCHRAMSSSRPSAFDALMSNARAAAKKKTPQTTNLSRSPNKRKIGETQDANLGKTIVSEGTLPKTEDLLEPVSDSANPRSDTSSIAEDSKTGAKKAKTLSKTDEMKSKIGLLKKKPNDFDPEKMSCWEKGERVPFLFVALAFDLISNESGRIVITDILCNMLRTVIATTPEDLVATVYLSANEIAPAHEGVELGIGESTIIKAISEAFGRTEDHVKKQNTELGDLGLVAKGSRSTQTMMFKPEPLTVVKVFDTFRQIAKESGKDSNEKKKNRMKALLVATTDCEPLYLTRLLQAKLRLGFSGQTVLAALGQAAVYNEEHSKPPPNTKSPLEEAAKIVKQVFTVLPVYDIIVPALLSGGVWNLPKTCNFTLGVPIGPMLAKPTKGVAEILNKFQDIVFTCEYKYDGERAQIHFMEDGTFEIYSRNAERNTGKYPDVALALSRLKKPSVKSFILDCEVVAFDREKKKILPFQILSTRARKNVNVNDIKVGVCIFAFDMLYLNGQQLIQENLKIRREKLYESFEEDPGYFQFATAVTSNDIDEIQKFLDASVDVGCEGLIIKTLDSDATYEPAKRSNNWLKLKKDYMDSIGDSVDLVPIAAFHGRGKRTGVYGAFLLACYDVDKEEFQSICKIGTGFSDAMLDERSSSLRSQVIATPKQYYRVGDSLNPDVWFEPTEVWEVKAADLTISPVHRAATGIVDPDKGISLRFPRLLRVREDKKPEEATSSEQIADLYQAQKHNHPSNEVKGDDD.

The N-terminal 64 residues, 1–64 (MLAIRSSNYL…AFDALMSNAR (64 aa)), are a transit peptide targeting the mitochondrion. The disordered stretch occupies residues 64–142 (RAAAKKKTPQ…TGAKKAKTLS (79 aa)). The Nuclear localization signal 1 signature appears at 68 to 75 (KKKTPQTT). The span at 116–128 (DSANPRSDTSSIA) shows a compositional bias: polar residues. Residues 337–346 (KLRLGFSGQT) are interaction with target DNA. E442 lines the ATP pocket. K444 (N6-AMP-lysine intermediate) is an active-site residue. ATP contacts are provided by R449 and R465. E497 contacts Mg(2+). Positions 505-512 (KKKILPFQ) match the Nuclear localization signal 2 motif. Positions 518–520 (ARK) are interaction with target DNA. E596 is a Mg(2+) binding site. ATP-binding residues include K601, R614, and K620. Positions 757 to 790 (DKKPEEATSSEQIADLYQAQKHNHPSNEVKGDDD) are disordered. Basic and acidic residues predominate over residues 781–790 (PSNEVKGDDD).

Belongs to the ATP-dependent DNA ligase family. Requires Mg(2+) as cofactor. In terms of tissue distribution, expressed in all vegetative and reproductive tissues.

Its subcellular location is the mitochondrion. The protein localises to the nucleus. It carries out the reaction ATP + (deoxyribonucleotide)n-3'-hydroxyl + 5'-phospho-(deoxyribonucleotide)m = (deoxyribonucleotide)n+m + AMP + diphosphate.. Functionally, essential protein. DNA ligase that seals nicks in double-stranded DNA during DNA replication, DNA recombination and DNA repair. Involved in repair of both single strand breaks (SSBs) and double strand breaks (DSBs). Required in the endosperm for embryogenesis, probably to repair DNA-breaks generated by DME. This is DNA ligase 1 (LIG1) from Arabidopsis thaliana (Mouse-ear cress).